A 284-amino-acid polypeptide reads, in one-letter code: 4-hydroxy-3-methylbut-2-enyl diphosphate reductase (284 aa).

[4Fe-4S] cluster is bound at residue C12. Positions 40 and 72 each coordinate (2E)-4-hydroxy-3-methylbut-2-enyl diphosphate. H40 and H72 together coordinate dimethylallyl diphosphate. Positions 40 and 72 each coordinate isopentenyl diphosphate. C94 is a [4Fe-4S] cluster binding site. Position 122 (H122) interacts with (2E)-4-hydroxy-3-methylbut-2-enyl diphosphate. Position 122 (H122) interacts with dimethylallyl diphosphate. H122 provides a ligand contact to isopentenyl diphosphate. Catalysis depends on E124, which acts as the Proton donor. Residue T161 coordinates (2E)-4-hydroxy-3-methylbut-2-enyl diphosphate. Position 193 (C193) interacts with [4Fe-4S] cluster. (2E)-4-hydroxy-3-methylbut-2-enyl diphosphate is bound by residues S221, N223, and S264. Dimethylallyl diphosphate-binding residues include S221, N223, and S264. Isopentenyl diphosphate-binding residues include S221, N223, and S264.

This sequence belongs to the IspH family. The cofactor is [4Fe-4S] cluster.

It catalyses the reaction isopentenyl diphosphate + 2 oxidized [2Fe-2S]-[ferredoxin] + H2O = (2E)-4-hydroxy-3-methylbut-2-enyl diphosphate + 2 reduced [2Fe-2S]-[ferredoxin] + 2 H(+). It carries out the reaction dimethylallyl diphosphate + 2 oxidized [2Fe-2S]-[ferredoxin] + H2O = (2E)-4-hydroxy-3-methylbut-2-enyl diphosphate + 2 reduced [2Fe-2S]-[ferredoxin] + 2 H(+). Its pathway is isoprenoid biosynthesis; dimethylallyl diphosphate biosynthesis; dimethylallyl diphosphate from (2E)-4-hydroxy-3-methylbutenyl diphosphate: step 1/1. The protein operates within isoprenoid biosynthesis; isopentenyl diphosphate biosynthesis via DXP pathway; isopentenyl diphosphate from 1-deoxy-D-xylulose 5-phosphate: step 6/6. Catalyzes the conversion of 1-hydroxy-2-methyl-2-(E)-butenyl 4-diphosphate (HMBPP) into a mixture of isopentenyl diphosphate (IPP) and dimethylallyl diphosphate (DMAPP). Acts in the terminal step of the DOXP/MEP pathway for isoprenoid precursor biosynthesis. The sequence is that of 4-hydroxy-3-methylbut-2-enyl diphosphate reductase from Dehalococcoides mccartyi (strain ATCC BAA-2266 / KCTC 15142 / 195) (Dehalococcoides ethenogenes (strain 195)).